The sequence spans 95 residues: Protein IDA-LIKE 2 (95 aa).

The N-terminal stretch at methionine 1–asparagine 35 is a signal peptide. Residues alanine 75–proline 95 form a disordered region.

Expressed in leaves, buds, flowers, seedlings and seeds. Detected at the base of pedicel, in the floral and funicule abscission zones and in vascular tissues.

It localises to the secreted. Its subcellular location is the extracellular space. Its function is as follows. May be involved in floral abscission. The polypeptide is Protein IDA-LIKE 2 (IDL2) (Arabidopsis thaliana (Mouse-ear cress)).